A 357-amino-acid chain; its full sequence is UDP-N-acetylglucosamine--N-acetylmuramyl-(pentapeptide) pyrophosphoryl-undecaprenol N-acetylglucosamine transferase (357 aa).

UDP-N-acetyl-alpha-D-glucosamine-binding positions include 12–14 (TAG), R166, S196, and Q291.

This sequence belongs to the glycosyltransferase 28 family. MurG subfamily.

It is found in the cell membrane. The catalysed reaction is di-trans,octa-cis-undecaprenyl diphospho-N-acetyl-alpha-D-muramoyl-L-alanyl-D-glutamyl-meso-2,6-diaminopimeloyl-D-alanyl-D-alanine + UDP-N-acetyl-alpha-D-glucosamine = di-trans,octa-cis-undecaprenyl diphospho-[N-acetyl-alpha-D-glucosaminyl-(1-&gt;4)]-N-acetyl-alpha-D-muramoyl-L-alanyl-D-glutamyl-meso-2,6-diaminopimeloyl-D-alanyl-D-alanine + UDP + H(+). The protein operates within cell wall biogenesis; peptidoglycan biosynthesis. Its function is as follows. Cell wall formation. Catalyzes the transfer of a GlcNAc subunit on undecaprenyl-pyrophosphoryl-MurNAc-pentapeptide (lipid intermediate I) to form undecaprenyl-pyrophosphoryl-MurNAc-(pentapeptide)GlcNAc (lipid intermediate II). The polypeptide is UDP-N-acetylglucosamine--N-acetylmuramyl-(pentapeptide) pyrophosphoryl-undecaprenol N-acetylglucosamine transferase (Geobacillus kaustophilus (strain HTA426)).